Here is a 413-residue protein sequence, read N- to C-terminus: MSVVEQAQRARTAAAELAVATRSVKDAALHAMADALVARTPEILAANGADLAAGREGGLNAAVLDRLALDTGRVAGIADALRQMAALPDPIGEVVRGSTLPNGLELRQVRVPFGVVGIVYEARPNVTVDAAGICLKSGNAVLLRGSSSAAQSNAALVAVLRDAVAGAGLPADSVQLLDATTRDSVKELMRARGLVDVLIPRGGAALIRTVVEESTVPVIETGVGNCHVYVDAAADVSKAVAIALNAKTQRLSTCNTAESLLVHAAVADAFLPPALAALAAAGVTVHGCPEVARYSAAVLPATDEDYATEYLSADISVAVVDSLDAAVAHIRRYGTGHTEAIVTDSQPAAREFVARVDAAAVMVNASTRFTDGGEFGFGAEIGISTQKLHARGPMGLPELTSTKYVVTGDGQLR.

The protein belongs to the gamma-glutamyl phosphate reductase family.

It localises to the cytoplasm. The enzyme catalyses L-glutamate 5-semialdehyde + phosphate + NADP(+) = L-glutamyl 5-phosphate + NADPH + H(+). Its pathway is amino-acid biosynthesis; L-proline biosynthesis; L-glutamate 5-semialdehyde from L-glutamate: step 2/2. In terms of biological role, catalyzes the NADPH-dependent reduction of L-glutamate 5-phosphate into L-glutamate 5-semialdehyde and phosphate. The product spontaneously undergoes cyclization to form 1-pyrroline-5-carboxylate. This Salinispora arenicola (strain CNS-205) protein is Gamma-glutamyl phosphate reductase.